Reading from the N-terminus, the 657-residue chain is Translation factor GUF1, mitochondrial (657 aa).

The N-terminal 21 residues, 1 to 21, are a transit peptide targeting the mitochondrion; sequence MLKTLGLRSLCPSLGGRGFRR. Positions 56–240 constitute a tr-type G domain; it reads ENYRNFSIVA…TIVDRIPPPT (185 aa). GTP is bound by residues 65 to 72, 132 to 136, and 186 to 189; these read AHVDHGKS, DTPGH, and NKID.

It belongs to the TRAFAC class translation factor GTPase superfamily. Classic translation factor GTPase family. LepA subfamily.

It is found in the mitochondrion inner membrane. It carries out the reaction GTP + H2O = GDP + phosphate + H(+). Promotes mitochondrial protein synthesis. May act as a fidelity factor of the translation reaction, by catalyzing a one-codon backward translocation of tRNAs on improperly translocated ribosomes. Binds to mitochondrial ribosomes in a GTP-dependent manner. The sequence is that of Translation factor GUF1, mitochondrial from Candida glabrata (strain ATCC 2001 / BCRC 20586 / JCM 3761 / NBRC 0622 / NRRL Y-65 / CBS 138) (Yeast).